The chain runs to 985 residues: Alanine--tRNA ligase, mitochondrial (985 aa).

Residues 1 to 23 constitute a mitochondrion transit peptide; the sequence is MAASVAAAAGRLRRAIGRSCPWQ. ATP-binding positions include Arg105, His123, Trp205, and 235 to 237; that span reads LWN. L-alanine contacts are provided by Asn237 and Asp260. Gly264 is a binding site for ATP. Zn(2+) is bound by residues His632, His636, Cys749, and His753.

Belongs to the class-II aminoacyl-tRNA synthetase family. In terms of assembly, monomer. Zn(2+) serves as cofactor.

It localises to the mitochondrion. It carries out the reaction tRNA(Ala) + L-alanine + ATP = L-alanyl-tRNA(Ala) + AMP + diphosphate. The enzyme catalyses (S)-lactate + ATP + H(+) = (S)-lactoyl-AMP + diphosphate. The catalysed reaction is (S)-lactoyl-AMP + L-lysyl-[protein] = N(6)-[(S)-lactoyl]-L-lysyl-[protein] + AMP + 2 H(+). Catalyzes the attachment of alanine to tRNA(Ala) in a two-step reaction: alanine is first activated by ATP to form Ala-AMP and then transferred to the acceptor end of tRNA(Ala). Also edits incorrectly charged tRNA(Ala) via its editing domain. In presence of high levels of lactate, also acts as a protein lactyltransferase that mediates lactylation of lysine residues in target proteins, such as CGAS. Acts as an inhibitor of cGAS/STING signaling by catalyzing lactylation of CGAS, preventing the formation of liquid-like droplets in which CGAS is activated. This is Alanine--tRNA ligase, mitochondrial (Aars2) from Rattus norvegicus (Rat).